The following is a 1774-amino-acid chain: U3 small nucleolar RNA-associated protein 10 (1774 aa).

Positions 1209–1228 are disordered; it reads TEQGKSDGDESGSEPDNDNP. The HEAT repeat unit spans residues 1734-1772; that stretch reads LVPVIAELLEDDDEEVEQEVRTGLVKVVETVLGEPFDRY.

This sequence belongs to the HEATR1/UTP10 family. In terms of assembly, component of the ribosomal small subunit (SSU) processome.

It localises to the nucleus. Its subcellular location is the nucleolus. Functionally, involved in nucleolar processing of pre-18S ribosomal RNA. Involved in ribosome biosynthesis. The polypeptide is U3 small nucleolar RNA-associated protein 10 (Eremothecium gossypii (strain ATCC 10895 / CBS 109.51 / FGSC 9923 / NRRL Y-1056) (Yeast)).